A 187-amino-acid polypeptide reads, in one-letter code: Translation machinery-associated protein 22 (187 aa).

Positions 94–165 (VTIKRIERNK…EIEEFILEKY (72 aa)) constitute an SUI1 domain.

It belongs to the DENR family. In terms of assembly, interacts with the 40S ribosomal subunit.

The protein resides in the cytoplasm. This chain is Translation machinery-associated protein 22 (tma-22), found in Neurospora crassa (strain ATCC 24698 / 74-OR23-1A / CBS 708.71 / DSM 1257 / FGSC 987).